A 431-amino-acid polypeptide reads, in one-letter code: Glutamate-1-semialdehyde 2,1-aminomutase 1 (431 aa).

Lys-268 bears the N6-(pyridoxal phosphate)lysine mark.

It belongs to the class-III pyridoxal-phosphate-dependent aminotransferase family. HemL subfamily. As to quaternary structure, homodimer. Requires pyridoxal 5'-phosphate as cofactor.

The protein resides in the cytoplasm. The enzyme catalyses (S)-4-amino-5-oxopentanoate = 5-aminolevulinate. Its pathway is porphyrin-containing compound metabolism; protoporphyrin-IX biosynthesis; 5-aminolevulinate from L-glutamyl-tRNA(Glu): step 2/2. The polypeptide is Glutamate-1-semialdehyde 2,1-aminomutase 1 (Anoxybacillus flavithermus (strain DSM 21510 / WK1)).